The primary structure comprises 131 residues: Fumarate reductase subunit C (131 aa).

The next 3 helical transmembrane spans lie at Glu-30–Leu-50, Phe-63–His-83, and Ile-109–Leu-129.

It belongs to the FrdC family. As to quaternary structure, part of an enzyme complex containing four subunits: a flavoprotein (FrdA), an iron-sulfur protein (FrdB), and two hydrophobic anchor proteins (FrdC and FrdD).

The protein localises to the cell inner membrane. Functionally, two distinct, membrane-bound, FAD-containing enzymes are responsible for the catalysis of fumarate and succinate interconversion; fumarate reductase is used in anaerobic growth, and succinate dehydrogenase is used in aerobic growth. Anchors the catalytic components of the fumarate reductase complex to the cell inner membrane, binds quinones. This chain is Fumarate reductase subunit C, found in Shigella dysenteriae serotype 1 (strain Sd197).